Consider the following 479-residue polypeptide: Ribulose bisphosphate carboxylase large chain (479 aa).

Residues 1-2 (MS) constitute a propeptide that is removed on maturation. 2 residues coordinate substrate: asparagine 123 and threonine 173. Lysine 175 acts as the Proton acceptor in catalysis. Lysine 177 provides a ligand contact to substrate. Lysine 201, aspartate 203, and glutamate 204 together coordinate Mg(2+). An N6-carboxylysine modification is found at lysine 201. A Phosphoserine modification is found at serine 208. The active-site Proton acceptor is the histidine 294. Positions 295 and 327 each coordinate substrate. Threonine 330 carries the phosphothreonine modification. Serine 379 is a substrate binding site.

The protein belongs to the RuBisCO large chain family. Type I subfamily. Heterohexadecamer of 8 large chains and 8 small chains; disulfide-linked. The disulfide link is formed within the large subunit homodimers. Mg(2+) serves as cofactor. In terms of processing, the disulfide bond which can form in the large chain dimeric partners within the hexadecamer appears to be associated with oxidative stress and protein turnover.

Its subcellular location is the plastid. It is found in the chloroplast. The catalysed reaction is 2 (2R)-3-phosphoglycerate + 2 H(+) = D-ribulose 1,5-bisphosphate + CO2 + H2O. The enzyme catalyses D-ribulose 1,5-bisphosphate + O2 = 2-phosphoglycolate + (2R)-3-phosphoglycerate + 2 H(+). RuBisCO catalyzes two reactions: the carboxylation of D-ribulose 1,5-bisphosphate, the primary event in carbon dioxide fixation, as well as the oxidative fragmentation of the pentose substrate in the photorespiration process. Both reactions occur simultaneously and in competition at the same active site. In Lobularia maritima (Sweet alyssum), this protein is Ribulose bisphosphate carboxylase large chain.